The following is a 185-amino-acid chain: MIVPINIYSDDVLRQQALPLEGVDKEVEELLGNMFETMYSAPGIGLAAPQVGRSLRLLVLDISCMREYANVKPMVVINPEIVAVKGYRSMEEGCLSLPGLQGDVVRPSSISLNYRDEHFEGQNAEFSGLLARVLQHEIDHLDGRLFVDRLQKKERRKVQKELDALASGRFIASYPVVLPVKVNKA.

Residues Cys-94 and His-136 each coordinate Fe cation. Residue Glu-137 is part of the active site. Residue His-140 participates in Fe cation binding.

It belongs to the polypeptide deformylase family. The cofactor is Fe(2+).

The catalysed reaction is N-terminal N-formyl-L-methionyl-[peptide] + H2O = N-terminal L-methionyl-[peptide] + formate. In terms of biological role, removes the formyl group from the N-terminal Met of newly synthesized proteins. Requires at least a dipeptide for an efficient rate of reaction. N-terminal L-methionine is a prerequisite for activity but the enzyme has broad specificity at other positions. In Chlorobium limicola (strain DSM 245 / NBRC 103803 / 6330), this protein is Peptide deformylase.